The primary structure comprises 155 residues: MWAQAARVQFRAPLDRGRSFASKVGPRGKVQAADPKTQAPRLVPEGTDRVSAAVVEHLERLALVNFSSREAVDRLEKAVAFADQLHAVDTDGVEPLESVLEDRCLYLRSDKVAEGGCAEELLQNSNHVVEEYFVAPPGNIPLPDMVGKVPSSTAE.

A mitochondrion-targeting transit peptide spans 1-20 (MWAQAARVQFRAPLDRGRSF). The disordered stretch occupies residues 19-42 (SFASKVGPRGKVQAADPKTQAPRL).

Belongs to the GatC family. In terms of assembly, subunit of the heterotrimeric GatCAB amidotransferase (AdT) complex, composed of A (QRSL1), B (GATB) and C (GATC) subunits.

Its subcellular location is the mitochondrion. It catalyses the reaction L-glutamyl-tRNA(Gln) + L-glutamine + ATP + H2O = L-glutaminyl-tRNA(Gln) + L-glutamate + ADP + phosphate + H(+). Allows the formation of correctly charged Gln-tRNA(Gln) through the transamidation of misacylated Glu-tRNA(Gln) in the mitochondria. The reaction takes place in the presence of glutamine and ATP through an activated gamma-phospho-Glu-tRNA(Gln). The polypeptide is Glutamyl-tRNA(Gln) amidotransferase subunit C, mitochondrial (Gatc) (Rattus norvegicus (Rat)).